The following is a 101-amino-acid chain: Small ribosomal subunit protein uS10 (101 aa).

It belongs to the universal ribosomal protein uS10 family. Part of the 30S ribosomal subunit.

Functionally, involved in the binding of tRNA to the ribosomes. The protein is Small ribosomal subunit protein uS10 of Parabacteroides distasonis (strain ATCC 8503 / DSM 20701 / CIP 104284 / JCM 5825 / NCTC 11152).